Reading from the N-terminus, the 138-residue chain is MIKSSAKHNDFGLTPDLTPLLDIIFIVMVFLLLTASVRLESLEVALPTTDSPVVNEVNKESITVNILATEPYWAIDGKPYLDWHNFSLALLESVQVDKRPVVIAADQGAEVQQLVKLLSFLQENGIQATQLLTEPSHS.

The Cytoplasmic portion of the chain corresponds to M1–D16. Residues L17–V37 form a helical membrane-spanning segment. Topologically, residues R38–S138 are periplasmic.

The protein belongs to the ExbD/TolR family. In terms of assembly, the accessory proteins ExbB and ExbD seem to form a complex with TonB.

It is found in the cell inner membrane. In terms of biological role, involved in the TonB-dependent energy-dependent transport of various receptor-bound substrates. This chain is Biopolymer transport protein exbD1 (exbD1), found in Vibrio cholerae serotype O1 (strain ATCC 39315 / El Tor Inaba N16961).